A 278-amino-acid polypeptide reads, in one-letter code: Nucleotide-binding protein Tmel_1373 (278 aa).

ATP is bound at residue glycine 10–serine 17. Position 58-61 (aspartate 58–serine 61) interacts with GTP.

It belongs to the RapZ-like family.

Its function is as follows. Displays ATPase and GTPase activities. The protein is Nucleotide-binding protein Tmel_1373 of Thermosipho melanesiensis (strain DSM 12029 / CIP 104789 / BI429).